The sequence spans 99 residues: Sec-independent protein translocase protein TatA (99 aa).

A helical membrane pass occupies residues 1–21 (MIGNLKPLEIVLIIAVILLLF). The disordered stretch occupies residues 46–99 (AMKKDDAATAAPTTETVADDTVPPQSTTARTIQAAPGDVTSSRPVSEAKPTTQS). Residues 53–69 (ATAAPTTETVADDTVPP) are compositionally biased toward low complexity. Positions 84–99 (VTSSRPVSEAKPTTQS) are enriched in polar residues.

This sequence belongs to the TatA/E family. In terms of assembly, the Tat system comprises two distinct complexes: a TatABC complex, containing multiple copies of TatA, TatB and TatC subunits, and a separate TatA complex, containing only TatA subunits. Substrates initially bind to the TatABC complex, which probably triggers association of the separate TatA complex to form the active translocon.

It localises to the cell membrane. In terms of biological role, part of the twin-arginine translocation (Tat) system that transports large folded proteins containing a characteristic twin-arginine motif in their signal peptide across membranes. TatA could form the protein-conducting channel of the Tat system. The sequence is that of Sec-independent protein translocase protein TatA from Streptomyces griseus subsp. griseus (strain JCM 4626 / CBS 651.72 / NBRC 13350 / KCC S-0626 / ISP 5235).